Here is a 251-residue protein sequence, read N- to C-terminus: Ubiquinone/menaquinone biosynthesis C-methyltransferase UbiE (251 aa).

Residues Thr-74, Asp-95, and 123-124 (NA) each bind S-adenosyl-L-methionine.

This sequence belongs to the class I-like SAM-binding methyltransferase superfamily. MenG/UbiE family.

The catalysed reaction is a 2-demethylmenaquinol + S-adenosyl-L-methionine = a menaquinol + S-adenosyl-L-homocysteine + H(+). The enzyme catalyses a 2-methoxy-6-(all-trans-polyprenyl)benzene-1,4-diol + S-adenosyl-L-methionine = a 5-methoxy-2-methyl-3-(all-trans-polyprenyl)benzene-1,4-diol + S-adenosyl-L-homocysteine + H(+). The protein operates within quinol/quinone metabolism; menaquinone biosynthesis; menaquinol from 1,4-dihydroxy-2-naphthoate: step 2/2. It functions in the pathway cofactor biosynthesis; ubiquinone biosynthesis. Methyltransferase required for the conversion of demethylmenaquinol (DMKH2) to menaquinol (MKH2) and the conversion of 2-polyprenyl-6-methoxy-1,4-benzoquinol (DDMQH2) to 2-polyprenyl-3-methyl-6-methoxy-1,4-benzoquinol (DMQH2). In Pseudoalteromonas translucida (strain TAC 125), this protein is Ubiquinone/menaquinone biosynthesis C-methyltransferase UbiE.